The following is a 169-amino-acid chain: E1B protein, small T-antigen (169 aa).

Belongs to the adenoviridae E1B 19 kDa protein family.

The protein is E1B protein, small T-antigen of Canine adenovirus serotype 1 (strain CLL) (CAdV-1).